The chain runs to 79 residues: Acyl carrier protein (79 aa).

The Carrier domain occupies 1-76; sequence MSLEDDVIAI…DVFTYIKKRQ (76 aa). An O-(pantetheine 4'-phosphoryl)serine modification is found at S36.

Belongs to the acyl carrier protein (ACP) family. 4'-phosphopantetheine is transferred from CoA to a specific serine of apo-ACP by AcpS. This modification is essential for activity because fatty acids are bound in thioester linkage to the sulfhydryl of the prosthetic group.

The protein localises to the cytoplasm. Its pathway is lipid metabolism; fatty acid biosynthesis. Its function is as follows. Carrier of the growing fatty acid chain in fatty acid biosynthesis. This is Acyl carrier protein from Chlamydia pneumoniae (Chlamydophila pneumoniae).